The chain runs to 129 residues: Small ribosomal subunit protein uS11c (129 aa).

This sequence belongs to the universal ribosomal protein uS11 family. Part of the 30S ribosomal subunit.

The protein resides in the plastid. Its subcellular location is the chloroplast. In Euglena gracilis, this protein is Small ribosomal subunit protein uS11c.